A 171-amino-acid chain; its full sequence is MSLLQVLHYPDERLRKVAKPVVDVNDAIRRIVDDMFETMYAEEGIGLAATQVDIHQRIIVIDVSESRDQRLVMINPELLEKSGETGIDEGCLSIPDQRGFVPRAEKVKVQALDRDGNSFELEADDLLAICIQHEMDHLVGKLFVDYLSPLKRQRIRQKMEKLARMTARAEK.

Residues Cys-91 and His-133 each coordinate Fe cation. The active site involves Glu-134. A Fe cation-binding site is contributed by His-137.

The protein belongs to the polypeptide deformylase family. Fe(2+) is required as a cofactor.

It catalyses the reaction N-terminal N-formyl-L-methionyl-[peptide] + H2O = N-terminal L-methionyl-[peptide] + formate. Its function is as follows. Removes the formyl group from the N-terminal Met of newly synthesized proteins. Requires at least a dipeptide for an efficient rate of reaction. N-terminal L-methionine is a prerequisite for activity but the enzyme has broad specificity at other positions. The polypeptide is Peptide deformylase (Sodalis glossinidius (strain morsitans)).